Consider the following 146-residue polypeptide: Large ribosomal subunit protein uL11 (146 aa).

This sequence belongs to the universal ribosomal protein uL11 family. Part of the ribosomal stalk of the 50S ribosomal subunit. Interacts with L10 and the large rRNA to form the base of the stalk. L10 forms an elongated spine to which L12 dimers bind in a sequential fashion forming a multimeric L10(L12)X complex. In terms of processing, one or more lysine residues are methylated.

Functionally, forms part of the ribosomal stalk which helps the ribosome interact with GTP-bound translation factors. This is Large ribosomal subunit protein uL11 from Corynebacterium kroppenstedtii (strain DSM 44385 / JCM 11950 / CIP 105744 / CCUG 35717).